The following is a 184-amino-acid chain: ATP synthase subunit b, chloroplastic (184 aa).

A helical membrane pass occupies residues 27 to 49 (LATNPINLSVVFGVLIFFGKGVL).

The protein belongs to the ATPase B chain family. As to quaternary structure, F-type ATPases have 2 components, F(1) - the catalytic core - and F(0) - the membrane proton channel. F(1) has five subunits: alpha(3), beta(3), gamma(1), delta(1), epsilon(1). F(0) has four main subunits: a(1), b(1), b'(1) and c(10-14). The alpha and beta chains form an alternating ring which encloses part of the gamma chain. F(1) is attached to F(0) by a central stalk formed by the gamma and epsilon chains, while a peripheral stalk is formed by the delta, b and b' chains.

It localises to the plastid. The protein localises to the chloroplast thylakoid membrane. Functionally, f(1)F(0) ATP synthase produces ATP from ADP in the presence of a proton or sodium gradient. F-type ATPases consist of two structural domains, F(1) containing the extramembraneous catalytic core and F(0) containing the membrane proton channel, linked together by a central stalk and a peripheral stalk. During catalysis, ATP synthesis in the catalytic domain of F(1) is coupled via a rotary mechanism of the central stalk subunits to proton translocation. In terms of biological role, component of the F(0) channel, it forms part of the peripheral stalk, linking F(1) to F(0). In Barbarea verna (Land cress), this protein is ATP synthase subunit b, chloroplastic.